The chain runs to 777 residues: MLARAERPRPGPRPPPVSLFPPPSSLLLLLLAMLSAPVCGRVPRSVPRTSLPISEADSYLTRFAAPHTYNYSALLVDPASHTLYVGARDSIFALTLPFSGEKPRRIDWMVPETHRQNCRKKGKKEDECHNFIQILAIANASHLLTCGTFAFDPKCGVIDVSSFQQVERLESGRGKCPFEPAQRSAAVMAGGVLYTATVKNFLGTEPIISRAVGRAEDWIRTETLSSWLNAPAFVAAMVLSPAEWGDEDGDDEIFFFFTETSRVLDSYERIKVPRVARVCAGDLGGRKTLQQRWTTFLKADLLCPGPEHGRASGVLQDMTELRPQPGAGTPLFYGIFSSQWEGAAISAVCAFRPQDIRAVLNGPFRELKHDCNRGLPVMDNEVPQPRPGECITNNMKFQQFGSSLSLPDRVLTFIRDHPLMDRPVFPADGRPLLVTTDTAYLRVVAHRVTSLSGKEYDVLYLGTEDGHLHRAVRIGAQLSVLEDLALFPETQPVESMKLYHDWLLVGSHTEVTQVNTSNCGRLQSCSECILAQDPVCAWSFRLDACVAHAGEHRGMVQDIESADVSSLCPKEPGEHPVVFEVPVATVGHVVLPCSPSSAWASCVWHQPSGVTSLTPRRDGLEVVVTPGAMGAYACECQEGGAARVVAAYSLVWGSQRGPANRAHTVVGAGLVGFFLGVLAASLTLLLIGRRQQRRRQRELLARDKVGLDLGAPPSGTTSYSQDPPSPSPEDERLPLALGKRGSGFGGFPPPFLLDSCPSPAHIRLTGAPLATCDETSI.

The N-terminal stretch at 1–40 (MLARAERPRPGPRPPPVSLFPPPSSLLLLLLAMLSAPVCG) is a signal peptide. The Extracellular portion of the chain corresponds to 41-667 (RVPRSVPRTS…PANRAHTVVG (627 aa)). In terms of domain architecture, Sema spans 48 to 516 (RTSLPISEAD…SHTEVTQVNT (469 aa)). An N-linked (GlcNAc...) asparagine glycan is attached at N70. An intrachain disulfide couples C118 to C128. The N-linked (GlcNAc...) asparagine glycan is linked to N139. 3 disulfide bridges follow: C146/C155, C279/C390, and C303/C349. N515 is a glycosylation site (N-linked (GlcNAc...) asparagine). The region spanning 518–569 (NCGRLQSCSECILAQDPVCAWSFRLDACVAHAGEHRGMVQDIESADVSSLCP) is the PSI domain. Intrachain disulfides connect C519-C536, C528-C545, and C593-C634. The 56-residue stretch at 586 to 641 (VGHVVLPCSPSSAWASCVWHQPSGVTSLTPRRDGLEVVVTPGAMGAYACECQEGGA) folds into the Ig-like C2-type domain. The chain crosses the membrane as a helical span at residues 668–688 (AGLVGFFLGVLAASLTLLLIG). Residues 689–777 (RRQQRRRQRE…PLATCDETSI (89 aa)) are Cytoplasmic-facing. Residues 703–742 (DKVGLDLGAPPSGTTSYSQDPPSPSPEDERLPLALGKRGS) form a disordered region. Phosphoserine occurs at positions 725 and 727. A PDZ-binding motif is present at residues 775–777 (TSI).

This sequence belongs to the semaphorin family. Interacts (via PDZ-binding motif) with DLG4/SAP90 (via PDZ domain 2); this interaction may promote translocation of DLG4/SAP90 to the membrane. Expressed throughout the adult brain, where it shows particularly strong expression in the hippocampus, corpus callosum, granular layer and deep nuclei of the cerebellum, and the mitral layer of the olfactory bulb (at protein level). At the cellular level, detected in neuronal precursors, postmitotic neurons, pyramidal neurons, and glial cells including mature oligodendocytes and oligodendroglial precursor cells (at protein level).

It is found in the cell membrane. The protein resides in the postsynaptic density. Its subcellular location is the perikaryon. The protein localises to the cell projection. It localises to the dendrite. Probable cell surface receptor that regulates oligodendroglial precursor cell migration. Might also regulate differentiation of oligodendroglial precursor cells. Has growth cone collapse activity against retinal ganglion-cell axons. This chain is Semaphorin-4F (Sema4f), found in Mus musculus (Mouse).